The following is a 427-amino-acid chain: Enolase (427 aa).

Residue Q163 participates in (2R)-2-phosphoglycerate binding. The active-site Proton donor is the E205. Mg(2+)-binding residues include D242, E285, and D312. (2R)-2-phosphoglycerate-binding residues include K337, R366, S367, and K388. The active-site Proton acceptor is the K337.

Belongs to the enolase family. It depends on Mg(2+) as a cofactor.

The protein resides in the cytoplasm. Its subcellular location is the secreted. It localises to the cell surface. The catalysed reaction is (2R)-2-phosphoglycerate = phosphoenolpyruvate + H2O. It participates in carbohydrate degradation; glycolysis; pyruvate from D-glyceraldehyde 3-phosphate: step 4/5. Its function is as follows. Catalyzes the reversible conversion of 2-phosphoglycerate (2-PG) into phosphoenolpyruvate (PEP). It is essential for the degradation of carbohydrates via glycolysis. This chain is Enolase, found in Bradyrhizobium sp. (strain BTAi1 / ATCC BAA-1182).